The sequence spans 204 residues: 3-isopropylmalate dehydratase small subunit (204 aa).

It belongs to the LeuD family. LeuD type 1 subfamily. Heterodimer of LeuC and LeuD.

It catalyses the reaction (2R,3S)-3-isopropylmalate = (2S)-2-isopropylmalate. The protein operates within amino-acid biosynthesis; L-leucine biosynthesis; L-leucine from 3-methyl-2-oxobutanoate: step 2/4. Catalyzes the isomerization between 2-isopropylmalate and 3-isopropylmalate, via the formation of 2-isopropylmaleate. This chain is 3-isopropylmalate dehydratase small subunit, found in Roseiflexus castenholzii (strain DSM 13941 / HLO8).